The primary structure comprises 140 residues: Transcription antitermination protein NusB (140 aa).

The protein belongs to the NusB family.

Functionally, involved in transcription antitermination. Required for transcription of ribosomal RNA (rRNA) genes. Binds specifically to the boxA antiterminator sequence of the ribosomal RNA (rrn) operons. The protein is Transcription antitermination protein NusB of Myxococcus xanthus (strain DK1622).